The chain runs to 1243 residues: DNA polymerase II large subunit (1243 aa).

It belongs to the archaeal DNA polymerase II family. Heterodimer of a large subunit and a small subunit.

It carries out the reaction DNA(n) + a 2'-deoxyribonucleoside 5'-triphosphate = DNA(n+1) + diphosphate. It catalyses the reaction Exonucleolytic cleavage in the 3'- to 5'-direction to yield nucleoside 5'-phosphates.. Functionally, possesses two activities: a DNA synthesis (polymerase) and an exonucleolytic activity that degrades single-stranded DNA in the 3'- to 5'-direction. Has a template-primer preference which is characteristic of a replicative DNA polymerase. In Nanoarchaeum equitans (strain Kin4-M), this protein is DNA polymerase II large subunit.